The sequence spans 630 residues: Plastin-1 (630 aa).

At methionine 1 the chain carries N-acetylmethionine. 2 consecutive EF-hand domains span residues 11-46 (EELEELQEAFNKIDIDNSGYVSDYELQDLFKEASLP) and 51-86 (KVREIVEKILAVADNNKDSRISFEEFVSLMQELKSK). Residues aspartate 24, aspartate 26, serine 28, tyrosine 30, glutamate 35, aspartate 64, asparagine 66, aspartate 68, arginine 70, and glutamate 75 each coordinate Ca(2+). Actin-binding regions lie at residues 108 to 381 (TSSI…GLHK) and 382 to 626 (PDNN…GKGL). Calponin-homology (CH) domains are found at residues 122–238 (EEEK…KVGL), 266–377 (LSPE…NTYP), 396–505 (SKEE…RRYT), and 517–626 (KVND…GKGL).

Monomer. In terms of processing, phosphorylated.

It localises to the cytoplasm. The protein localises to the cell projection. The protein resides in the stereocilium. Actin-bundling protein. In the inner ear, it is required for stereocilia formation. Mediates liquid packing of actin filaments that is necessary for stereocilia to grow to their proper dimensions. The chain is Plastin-1 (PLS1) from Bos taurus (Bovine).